Here is a 1288-residue protein sequence, read N- to C-terminus: MNEKEELHLYHVSLQKQRNYVHSCIGHFVDYRHHHIRAQGGSVEGGKKGSKWRKQLQICMATQTQVELYDVEEGRLRRLFTRTVFGTITGLSSVVADGRSVLIVVGDSGKMSVLRFKYEGGRVRLEALFNEPLSRSGVRRLSPQAHVSVDPQGRCVLLSAMERNKVCYLMDVKQGELQVSSPLEANRPNYVTMQTAACDVAFDNPIFASLEIDLADGAKYLFFYMLDLGLNHMAKVADFELGDGSANFIMSVPDLEQYGINTKAGGPDDGDPDAIVPFVLMGFDNYVSLKDLRGRYDINVQIPTRKLSQKTIITAGTVQKLKRDFFMLLQSNHGDLYKVKILPDEKTASPVVTISYFDTIPQAQNLHIFKHGYMFANSEYGNSYLYQFENLDDEEESMLTSVMPGRRLIIEPRTVLKNLLVADKLALVNPILSSQLTERVPLTIATSTLGDVRLFTAGVNFMDIISSPLPAAPLDIWTVATNGSRFHKLLFIALQESTMILKIAAGTVEELELPHNPFVIAQDKTVLIAHMGGQSIIQVTENKMVHIIENRDESYESKLEWFPPAGICILKASSNSTQLILALSNNEVVYFEIGSNESLNELQDRIEVEERITALAIGNGNRSDYMIIASVDSTVKVYSLKVQDQANFLEVVSMQVLVSPASSLQLASSGGSLCLHIGLDSGVYVRSKLDRNTGELFDVRTKYLGTKPVEISLLLDMNPYINEEVDDEGEEEEEQDDEESLGGPHSRLVPCVVLHSGKTWISYELDSSLFIRPLLNDQSLKRVAQFTSNEIQRNGCCSISSAGFLVIGRIGTFRNNDCWFQESSLALPDSEDSVNGNELENDEKDPDALLEEKQKVNSSIGKLIIPDPDDIKLFYYCEYNEVENSCRVSLFKQGISYKHENSTEAFQLIPDCRPSTATIARFGLDMKHLVISTVNGVLKTFVIRITKAANNRRFELLALHDTVAGSTIHAMCPFHDKLLVPLANAVVLYGLGKKQLLKKSISYLPTSITKIVALDQWNGTRVAVGDIHESVTLLHFDERKNQFIPVADDVTKRHVTVVKFVDECTVIGGDRFGNIWLLRLPLEYDRLIKEGVDSYLLTLNTGIPSNIRECVFKWQLLNHFYINDIPMSFHLIASPQMADRASILYAGLQGTIGYLIPLITRREIEFFDLLEQAMRDADHLFYLDQENRLNDTSELNDGADEEGSVIDRRFPSVQKKRKIPEGAYSLVGRDAMMYRSYYNPVRHVTDGDLCEQFLELYPSEKNFLAARVDNRSVQEIERRINDMRTNCM.

Residues 725-740 show a composition bias toward acidic residues; it reads VDDEGEEEEEQDDEES. A disordered region spans residues 725–744; the sequence is VDDEGEEEEEQDDEESLGGP.

It belongs to the RSE1 family. Associated with the spliceosome.

It is found in the nucleus. Its function is as follows. Involved in pre-mRNA splicing and cell cycle control. The polypeptide is Pre-mRNA-splicing factor RSE1 (RSE1) (Eremothecium gossypii (strain ATCC 10895 / CBS 109.51 / FGSC 9923 / NRRL Y-1056) (Yeast)).